The chain runs to 326 residues: L-lactate dehydrogenase (326 aa).

Residues V26, D47, K52, Y78, and 92–93 (GA) contribute to the NAD(+) site. Residues Q95 and R101 each contribute to the substrate site. Residues T114, 131-133 (ASN), and S156 each bind NAD(+). 133 to 136 (NPVD) lines the substrate pocket. 161–164 (DTAR) is a substrate binding site. 2 residues coordinate beta-D-fructose 1,6-bisphosphate: R166 and H181. Residue H188 is the Proton acceptor of the active site. Y233 is subject to Phosphotyrosine. Residue T242 participates in substrate binding.

The protein belongs to the LDH/MDH superfamily. LDH family. In terms of assembly, homotetramer.

Its subcellular location is the cytoplasm. It catalyses the reaction (S)-lactate + NAD(+) = pyruvate + NADH + H(+). It participates in fermentation; pyruvate fermentation to lactate; (S)-lactate from pyruvate: step 1/1. With respect to regulation, allosterically activated by fructose 1,6-bisphosphate (FBP). Catalyzes the conversion of lactate to pyruvate. The protein is L-lactate dehydrogenase of Corynebacterium jeikeium (strain K411).